Reading from the N-terminus, the 1061-residue chain is MKFLLLSTFIFLYSSLALARDKHYFIGITEAVWDYASGTEEKKLISVDTEQSNFYLQNGPDRIGRKYKKALYFEYTDGTFSKTIDKPAWLGFLGPVIKAEVEDKVYVHLKNLASRIYTFHAHGVTYTKEYEGAVYPDNTTDFQRADDKVLPGQQYVYVLHANEPSPGEGDSNCVTRIYHSHVDAPKDIASGLIGPLILCKKGSLYKEKEKNIDQEFVLMFSVVDENLSWYLEDNIKTFCSEPEKVDKDNEDFQESNRMYSINGYTFGSLPGLSMCAADRVKWYLFGMGNEVDVHSAFFHGQALTSRNYQTDIINLFPATLIDAYMVAQNPGVWMLSCQNLNHLKAGLQAFFQVRDCNKPSPEDNIQDRHVRHYYIAAEEVIWNYAPSGTDIFTGENLTALESDSRVFFEQGATRIGGSYKKMAYREYTDGSFTNRKQRGPDEEHLGILGPVIWAEVGDTIKVTFHNKGQHPLSIQPMGVSFTAENEGTYYGPPGRSSQQAASHVAPKETFTYEWTVPKEMGPTYADPVCLSKMYYSGVDPTKDIFTGLIGPMKICKKGSLLADGRQKDVDKEFYLFPTVFDENESLLLDDNIRMFTTAPDQVDKEDEDFQESNKMHSMNGFMYGNQPGLNMCLGESIVWYLFSAGNEADVHGIYFSGNTYLSKGERRDTANLFPHKSLTLLMNPDTKGTFDVECLTTDHYTGGMKQKYTVNQCQRQFEDFTVYLGERTYYVAAVEVEWDYSPSRAWEKELHHLQEQNVSNVFLDKEEFFIGSKYKKVVYRQFTDSSFREQVKRRAEDEHLGILGPPIHANVGDKVKVVFKNMATRPYSIHAHGVKTESSTVVPTLPGEVRTYTWQIPERSGAGREDSACIPWAYYSTVDRVKDLYSGLIGPLIVCRKSYVKVFSPKKKMEFFLLFLVFDENESWYLDDNIKTYSEHPEKVNKDNEEFLESNKMHAINGKMFGNLQGLTMHVKDEVNWYVMGMGNEIDLHTVHFHGHSFQYKHRGVYSSDVFDLFPGTYQTLEMFPQTPGTWLLHCHVTDHVHAGMATTYTVLPVEQETKSG.

The signal sequence occupies residues 1–19 (MKFLLLSTFIFLYSSLALA). Plastocyanin-like domains are found at residues 20–199 (RDKH…LILC), 208–356 (KEKN…VRDC), 369–555 (HVRH…MKIC), 565–713 (RQKD…VNQC), 725–895 (GERT…LIVC), and 903–1057 (FSPK…VEQE). Residues Tyr-55, Gly-64, and Tyr-67 each coordinate Na(+). Cu(2+) contacts are provided by His-120 and His-122. His-120 provides a ligand contact to O2. Lys-128 provides a ligand contact to Ca(2+). A glycan (N-linked (GlcNAc...) asparagine) is linked at Asn-138. The Ca(2+) site is built by Gln-143, Asp-146, and Asp-147. An intrachain disulfide couples Cys-173 to Cys-199. His-179 and His-181 together coordinate Cu(2+). His-179 lines the O2 pocket. Asn-226 carries N-linked (GlcNAc...) asparagine glycosylation. Na(+) is bound at residue Ser-255. Cys-275 and Cys-356 form a disulfide bridge. Residues His-294, Cys-337, and His-342 each contribute to the Cu(2+) site. Asn-396 carries N-linked (GlcNAc...) asparagine glycosylation. Na(+)-binding residues include Phe-407, Gly-416, and Tyr-419. Cys-529 and Cys-555 are oxidised to a cystine. Asn-583 is a glycosylation site (N-linked (GlcNAc...) asparagine). Ser-612 contributes to the Na(+) binding site. A disulfide bridge links Cys-632 with Cys-713. Cu(2+) is bound by residues His-651, Cys-694, His-699, and Met-704. The active-site Nucleophile; for glutathione peroxidase activity is the Cys-694. Asn-757 is a glycosylation site (N-linked (GlcNAc...) asparagine). Na(+) contacts are provided by Phe-762, Gly-771, and Tyr-774. Residues Cys-869 and Cys-895 are joined by a disulfide bond. N-linked (GlcNAc...) asparagine glycosylation occurs at Asn-921. A Na(+)-binding site is contributed by Ser-950. Cu(2+)-binding residues include His-989, His-992, His-994, His-1034, Cys-1035, His-1036, His-1040, and Met-1045. O2 is bound by residues His-992 and His-994. An O2-binding site is contributed by His-1036.

This sequence belongs to the multicopper oxidase family. Found in a complex with MPO and LTF; interacts directly with MPO and LTF, which allows Fe(3+) incorporation into LTF, activation of CP ferroxidase activity and protection of CP antioxidant properties by MPO. Requires Cu(2+) as cofactor. Expressed in many tissues, including liver, eye and brain.

The protein localises to the secreted. The catalysed reaction is 4 Fe(2+) + O2 + 4 H(+) = 4 Fe(3+) + 2 H2O. The enzyme catalyses 4 Cu(+) + O2 + 4 H(+) = 4 Cu(2+) + 2 H2O. It carries out the reaction a hydroperoxide + 2 glutathione = an alcohol + glutathione disulfide + H2O. It catalyses the reaction 4 nitric oxide + O2 + 2 H2O = 4 nitrite + 4 H(+). The catalysed reaction is 2 glutathione + H2O2 = glutathione disulfide + 2 H2O. Multifunctional blue, copper-binding (6-7 atoms per molecule) glycoprotein. It has ferroxidase activity oxidizing Fe(2+) to Fe(3+) without releasing radical oxygen species. It is involved in iron transport across the cell membrane. Copper ions provide a large number of enzymatic activites. Oxidizes highly toxic ferrous ions to the ferric state for further incorporation onto apo-transferrins, catalyzes Cu(+) oxidation and promotes the oxidation of biogenic amines such as norepinephrin and serotonin. Provides Cu(2+) ions for the ascorbate-mediated deaminase degradation of the heparan sulfate chains of GPC1. Has glutathione peroxidase-like activity, can remove both hydrogen peroxide and lipid hydroperoxide in the presence of thiols. Also shows NO-oxidase and NO2 synthase activities that determine endocrine NO homeostasis. The chain is Ceruloplasmin (Cp) from Mus musculus (Mouse).